Reading from the N-terminus, the 645-residue chain is Acetyl-coenzyme A synthetase (645 aa).

CoA is bound by residues arginine 190–lysine 193, threonine 308, and asparagine 332. ATP-binding positions include glycine 384–proline 386, aspartate 408–threonine 413, aspartate 497, and arginine 512. Serine 520 contacts CoA. Arginine 523 provides a ligand contact to ATP. Mg(2+) contacts are provided by valine 534, histidine 536, and valine 539. Residue arginine 581 coordinates CoA. An N6-acetyllysine modification is found at lysine 606.

This sequence belongs to the ATP-dependent AMP-binding enzyme family. The cofactor is Mg(2+). In terms of processing, acetylated. Deacetylation by the SIR2-homolog deacetylase activates the enzyme.

It catalyses the reaction acetate + ATP + CoA = acetyl-CoA + AMP + diphosphate. In terms of biological role, catalyzes the conversion of acetate into acetyl-CoA (AcCoA), an essential intermediate at the junction of anabolic and catabolic pathways. AcsA undergoes a two-step reaction. In the first half reaction, AcsA combines acetate with ATP to form acetyl-adenylate (AcAMP) intermediate. In the second half reaction, it can then transfer the acetyl group from AcAMP to the sulfhydryl group of CoA, forming the product AcCoA. The protein is Acetyl-coenzyme A synthetase of Bdellovibrio bacteriovorus (strain ATCC 15356 / DSM 50701 / NCIMB 9529 / HD100).